The chain runs to 974 residues: Ephrin type-B receptor 3 (974 aa).

An N-terminal signal peptide occupies residues 1-16 (MLPAVFVILALSAVQG). Over 17 to 534 (LEETLMDTKW…RSSLQEQVPM (518 aa)) the chain is Extracellular. Positions 18-196 (EETLMDTKWT…FFKKCPRTTA (179 aa)) constitute an Eph LBD domain. Cys60 and Cys178 are disulfide-bonded. Fibronectin type-III domains are found at residues 318–426 (VPSA…TNQA) and 427–522 (APSS…IAED). Residues Asn330 and Asn420 are each glycosylated (N-linked (GlcNAc...) asparagine). The helical transmembrane segment at 535–555 (VVGSVTAGLIFIIAVVIIVIV) threads the bilayer. The Cytoplasmic portion of the chain corresponds to 556-974 (CFSRKQRNDS…QMSQTLPVQV (419 aa)). Tyr590 is subject to Phosphotyrosine; by autocatalysis. One can recognise a Protein kinase domain in the interval 609–872 (VKIEEVIGAG…QIVSSLDKLI (264 aa)). ATP-binding positions include 615–623 (IGAGEFGEV) and Lys641. The Proton acceptor role is filled by Asp734. The 65-residue stretch at 901–965 (TTFPTVSDWL…LNSVQDMRLQ (65 aa)) folds into the SAM domain. The PDZ-binding signature appears at 972–974 (VQV).

This sequence belongs to the protein kinase superfamily. Tyr protein kinase family. Ephrin receptor subfamily. In terms of assembly, heterotetramer upon binding of the ligand. The heterotetramer is composed of an ephrin dimer and a receptor dimer. Oligomerization is probably required to induce biological responses. Phosphorylated. Autophosphorylates upon ligand-binding. Autophosphorylation on Tyr-590 is required for interaction with SH2 domain-containing proteins. Expressed in the embryo in pre-somitic mesoderm, caudal somites, midbrain, and cement gland. Most abundant in adult brain, eye, heart, lung and ovary. Lower levels in intestine, kidney, oviduct and pharynx.

It localises to the cell membrane. It is found in the cell projection. The protein resides in the dendrite. The enzyme catalyses L-tyrosyl-[protein] + ATP = O-phospho-L-tyrosyl-[protein] + ADP + H(+). Functionally, receptor tyrosine kinase which binds promiscuously transmembrane ephrin-B family ligands residing on adjacent cells, leading to contact-dependent bidirectional signaling into neighboring cells. The signaling pathway downstream of the receptor is referred to as forward signaling while the signaling pathway downstream of the ephrin ligand is referred to as reverse signaling. Generally has an overlapping and redundant function with EPHB2. Like EPHB2, functions in axon guidance during development. In addition to its role in axon guidance also plays an important redundant role with other ephrin-B receptors in development and maturation of dendritic spines and the formation of excitatory synapses. May control other aspects of development through regulation of cell migration and positioning. The sequence is that of Ephrin type-B receptor 3 (ephb3) from Xenopus laevis (African clawed frog).